The sequence spans 768 residues: Ral guanine nucleotide dissociation stimulator-like 1 (768 aa).

One can recognise an N-terminal Ras-GEF domain in the interval 65-196 (KIRTIKAGTL…RAQNLLEQFQ (132 aa)). The Ras-GEF domain occupies 232-501 (SEDLVAEQLT…YALSCEIEAA (270 aa)). The residue at position 520 (Ser520) is a Phosphoserine. The disordered stretch occupies residues 528-623 (MITSPTPTKE…PPSCNNNPKI (96 aa)). Low complexity-rich tracts occupy residues 541–561 (STAS…SCES), 586–596 (ESSSSCSSIHS), and 605–621 (SSLI…NNNP). Positions 648–735 (DTCIIRISVE…FDFILRKKNS (88 aa)) constitute a Ras-associating domain.

In terms of assembly, interacts with Ras. Expressed in a wide variety of tissues with strong expression being seen in the heart, brain, kidney, spleen and testis.

Probable guanine nucleotide exchange factor. This is Ral guanine nucleotide dissociation stimulator-like 1 (RGL1) from Homo sapiens (Human).